Reading from the N-terminus, the 86-residue chain is Small ribosomal subunit protein bS20 (86 aa).

Belongs to the bacterial ribosomal protein bS20 family.

Functionally, binds directly to 16S ribosomal RNA. The polypeptide is Small ribosomal subunit protein bS20 (Exiguobacterium sibiricum (strain DSM 17290 / CCUG 55495 / CIP 109462 / JCM 13490 / 255-15)).